Reading from the N-terminus, the 307-residue chain is Ribosomal RNA small subunit methyltransferase H (307 aa).

S-adenosyl-L-methionine-binding positions include 33–35, D51, F82, D96, and Q103; that span reads GGY.

This sequence belongs to the methyltransferase superfamily. RsmH family.

The protein localises to the cytoplasm. It carries out the reaction cytidine(1402) in 16S rRNA + S-adenosyl-L-methionine = N(4)-methylcytidine(1402) in 16S rRNA + S-adenosyl-L-homocysteine + H(+). Specifically methylates the N4 position of cytidine in position 1402 (C1402) of 16S rRNA. This is Ribosomal RNA small subunit methyltransferase H from Rickettsia massiliae (strain Mtu5).